The following is a 395-amino-acid chain: Indoleacetate--lysine synthetase (395 aa).

This sequence belongs to the ATP-dependent AMP-binding enzyme family.

The catalysed reaction is (indol-3-yl)acetate + L-lysine + ATP = N(6)-[(indole-3-yl)acetyl]-L-lysine + ADP + phosphate + H(+). In terms of biological role, conversion of IAA to IAA-lysine. This is Indoleacetate--lysine synthetase (iaaL) from Pseudomonas savastanoi (Pseudomonas syringae pv. savastanoi).